The chain runs to 895 residues: uncharacterized protein (895 aa).

The disordered stretch occupies residues 257–283 (KSHKYPPGPPDNSSSNTSGQQNTSNTS). Low complexity predominate over residues 268–283 (NSSSNTSGQQNTSNTS).

This is an uncharacterized protein from Acanthamoeba polyphaga mimivirus (APMV).